The sequence spans 431 residues: Pachytene checkpoint protein 2 homolog (431 aa).

Met-1 bears the N-acetylmethionine mark. Residue 179–186 (GPPGTGKT) participates in ATP binding.

Belongs to the AAA ATPase family. PCH2 subfamily. As to quaternary structure, specifically interacts with the ligand binding domain of the thyroid receptor (TR). This interaction does not require the presence of thyroid hormone for its interaction. Interacts with proteasome subunit PSMA8; to participate in meiosis progression during spermatogenesis.

In terms of biological role, plays a key role in chromosome recombination and chromosome structure development during meiosis. Required at early steps in meiotic recombination that leads to non-crossovers pathways. Also needed for efficient completion of homologous synapsis by influencing crossover distribution along the chromosomes affecting both crossovers and non-crossovers pathways. Also required for development of higher-order chromosome structures and is needed for synaptonemal-complex formation. In males, required for efficient synapsis of the sex chromosomes and for sex body formation. Promotes early steps of the DNA double-strand breaks (DSBs) repair process upstream of the assembly of RAD51 complexes. Required for depletion of HORMAD1 and HORMAD2 from synapsed chromosomes. Plays a role in mitotic spindle assembly checkpoint (SAC) activation. This chain is Pachytene checkpoint protein 2 homolog (TRIP13), found in Sus scrofa (Pig).